The sequence spans 236 residues: Small ribosomal subunit protein uS3 (236 aa).

One can recognise a KH type-2 domain in the interval 39–107 (IREFLTEELK…DTSLNIVEVR (69 aa)). The interval 214-236 (ASERRAVEGDNQGSSSNRRRENA) is disordered.

This sequence belongs to the universal ribosomal protein uS3 family. As to quaternary structure, part of the 30S ribosomal subunit. Forms a tight complex with proteins S10 and S14.

Binds the lower part of the 30S subunit head. Binds mRNA in the 70S ribosome, positioning it for translation. The protein is Small ribosomal subunit protein uS3 of Brucella abortus (strain S19).